The primary structure comprises 445 residues: 6-phosphogluconate dehydrogenase, decarboxylating (445 aa).

NADP(+) is bound by residues 1 to 4, 22 to 24, 63 to 65, and Asn-91; these read AVMG, NRS, and VKA. Residues Asn-91 and 117 to 119 contribute to the substrate site; that span reads SGG. Residue Lys-172 is the Proton acceptor of the active site. 175 to 176 is a binding site for substrate; the sequence is HN. Catalysis depends on Glu-179, which acts as the Proton donor. Tyr-180, Lys-249, Arg-276, Arg-434, and His-440 together coordinate substrate.

It belongs to the 6-phosphogluconate dehydrogenase family. In terms of assembly, homodimer.

It carries out the reaction 6-phospho-D-gluconate + NADP(+) = D-ribulose 5-phosphate + CO2 + NADPH. It functions in the pathway carbohydrate degradation; pentose phosphate pathway; D-ribulose 5-phosphate from D-glucose 6-phosphate (oxidative stage): step 3/3. Functionally, catalyzes the oxidative decarboxylation of 6-phosphogluconate to ribulose 5-phosphate and CO(2), with concomitant reduction of NADP to NADPH. The chain is 6-phosphogluconate dehydrogenase, decarboxylating (gnd) from Citrobacter freundii.